A 185-amino-acid chain; its full sequence is Ribosome-recycling factor (185 aa).

The disordered stretch occupies residues 139–159; sequence IDSLEKDGDVSGDEADRAKKK. Positions 141 to 159 are enriched in basic and acidic residues; it reads SLEKDGDVSGDEADRAKKK.

The protein belongs to the RRF family.

Its subcellular location is the cytoplasm. Functionally, responsible for the release of ribosomes from messenger RNA at the termination of protein biosynthesis. May increase the efficiency of translation by recycling ribosomes from one round of translation to another. The polypeptide is Ribosome-recycling factor (Sorangium cellulosum (strain So ce56) (Polyangium cellulosum (strain So ce56))).